The primary structure comprises 441 residues: Endothelin receptor type B (441 aa).

Residues 1–26 (MQPLPSLCGRALVALILACGVAGIQA) form the signal peptide. The Extracellular segment spans residues 27–100 (EEREFPPAGA…GPIEIKETFK (74 aa)). Positions 30-87 (EFPPAGATQPLPGTGEMMETPTETSWPGRSNASDPRSSATPQIPRGGRMAGIPPRTPP) are disordered. The span at 41 to 53 (PGTGEMMETPTET) shows a compositional bias: low complexity. The span at 54–70 (SWPGRSNASDPRSSATP) shows a compositional bias: polar residues. Residues 101-125 (YINTVVSCLVFVLGIIGNSTLLRII) traverse the membrane as a helical segment. Over 126–136 (YKNKCMRNGPN) the chain is Cytoplasmic. A helical transmembrane segment spans residues 137–162 (ILIASLALGDLLHIIIDIPINTYKLL). Residues 163–174 (AKDWPFGVEMCK) are Extracellular-facing. Cysteines 173 and 254 form a disulfide. The chain crosses the membrane as a helical span at residues 175 to 196 (LVPFIQKASVGITVLSLCALSI). The Cytoplasmic portion of the chain corresponds to 197-217 (DRYRAVASWSRIKGIGVPKWT). Residues 218-242 (AVEIVLIWVVSVVLAVPEAVGFDII) traverse the membrane as a helical segment. Topologically, residues 243-270 (TSDHIGNKLRICLLHPTQKTAFMQFYKT) are extracellular. A helical transmembrane segment spans residues 271 to 295 (AKDWWLFSFYFCLPLAITALFYTLM). At 296 to 323 (TCEMLRKKSGMQIALNDHLKQRREVAKT) the chain is on the cytoplasmic side. The residue at position 304 (Ser-304) is a Phosphoserine. Residues 324 to 349 (VFCLVLVFALCWLPLHLSRILKLTLY) traverse the membrane as a helical segment. The Extracellular portion of the chain corresponds to 350-361 (DQHDPRRCEFLS). A helical transmembrane segment spans residues 362 to 388 (FLLVLDYIGINMASLNSCINPIALYLV). At 389 to 441 (SKRFKNCFKSCLCCWCQSFEEKQSLEEKQSCLKFKANDHGYDNFRSSNKYSSS) the chain is on the cytoplasmic side. Residues Cys-402 and Cys-404 are each lipidated (S-palmitoyl cysteine). Phosphoserine occurs at positions 418, 434, and 435. Phosphotyrosine is present on Tyr-438. Phosphoserine is present on residues Ser-439, Ser-440, and Ser-441.

The protein belongs to the G-protein coupled receptor 1 family. Endothelin receptor subfamily. EDNRB sub-subfamily. Post-translationally, it is not sure whether phosphorylation is on Ser-434 or Ser-435.

It localises to the cell membrane. Non-specific receptor for endothelin 1, 2, and 3. Mediates its action by association with G proteins that activate a phosphatidylinositol-calcium second messenger system. This chain is Endothelin receptor type B (EDNRB), found in Bos taurus (Bovine).